The primary structure comprises 261 residues: Antiviral protein S (261 aa).

Disulfide bonds link Cys34-Cys258 and Cys84-Cys105. Glu175 is a catalytic residue.

This sequence belongs to the ribosome-inactivating protein family. Type 1 RIP subfamily.

The catalysed reaction is Endohydrolysis of the N-glycosidic bond at one specific adenosine on the 28S rRNA.. In terms of biological role, inhibits viral infection of plants, and protein synthesis in vitro. This Phytolacca americana (American pokeweed) protein is Antiviral protein S.